An 83-amino-acid polypeptide reads, in one-letter code: Hainantoxin-III 9 (83 aa).

Positions 1-21 (MKASMFLALAGLALLFVVCYA) are cleaved as a signal peptide. A propeptide spanning residues 22 to 48 (SESEEKEFPIELLSKIFAVDVFKGEER) is cleaved from the precursor. 3 disulfide bridges follow: C50/C65, C57/C70, and C64/C77. A Leucine amide modification is found at L81.

It belongs to the neurotoxin 10 (Hwtx-1) family. 15 (Hntx-3) subfamily. As to quaternary structure, monomer. In terms of tissue distribution, expressed by the venom gland.

The protein resides in the secreted. In terms of biological role, selective antagonist of neuronal tetrodotoxin (TTX)-sensitive voltage-gated sodium channels (IC(50)=1270 nM on Nav1.1/SCN1A, 270 nM on Nav1.2/SCN2A, 491 nM on Nav1.3/SCN3A and 232 nM on Nav1.7/SCN9A). This toxin suppress Nav1.7 current amplitude without significantly altering the activation, inactivation, and repriming kinetics. Short extreme depolarizations partially activate the toxin-bound channel, indicating voltage-dependent inhibition of this toxin. This toxin increases the deactivation of the Nav1.7 current after extreme depolarizations. The toxin-Nav1.7 complex is gradually dissociated upon prolonged strong depolarizations in a voltage-dependent manner, and the unbound toxin rebinds to Nav1.7 after a long repolarization. Moreover, analysis of chimeric channels showed that the DIIS3-S4 linker is critical for toxin binding to Nav1.7. These data are consistent with this toxin interacting with Nav1.7 site 4 and trapping the domain II voltage sensor in the closed state. In Cyriopagopus hainanus (Chinese bird spider), this protein is Hainantoxin-III 9.